Consider the following 344-residue polypeptide: Glycerol-3-phosphate dehydrogenase [NAD(P)+] (344 aa).

NADPH is bound by residues Ser-23, Trp-24, Arg-44, and Lys-118. The sn-glycerol 3-phosphate site is built by Lys-118, Gly-147, and Thr-149. Residue Ala-151 coordinates NADPH. The sn-glycerol 3-phosphate site is built by Lys-202, Asp-255, Ser-265, Arg-266, and Asn-267. Lys-202 (proton acceptor) is an active-site residue. NADPH is bound at residue Arg-266. An NADPH-binding site is contributed by Glu-292.

It belongs to the NAD-dependent glycerol-3-phosphate dehydrogenase family.

The protein localises to the cytoplasm. The enzyme catalyses sn-glycerol 3-phosphate + NAD(+) = dihydroxyacetone phosphate + NADH + H(+). It catalyses the reaction sn-glycerol 3-phosphate + NADP(+) = dihydroxyacetone phosphate + NADPH + H(+). The protein operates within membrane lipid metabolism; glycerophospholipid metabolism. In terms of biological role, catalyzes the reduction of the glycolytic intermediate dihydroxyacetone phosphate (DHAP) to sn-glycerol 3-phosphate (G3P), the key precursor for phospholipid synthesis. This chain is Glycerol-3-phosphate dehydrogenase [NAD(P)+], found in Nitrosococcus oceani (strain ATCC 19707 / BCRC 17464 / JCM 30415 / NCIMB 11848 / C-107).